We begin with the raw amino-acid sequence, 258 residues long: Chemokine-binding protein (258 aa).

An N-terminal signal peptide occupies residues 1–17 (MKQYIVLACMCLAAAAM). Residues 65–93 (TEITESESDPDPEVESEDDSTSVEDVDPP) form a disordered region. The segment covering 68–91 (TESESDPDPEVESEDDSTSVEDVD) has biased composition (acidic residues).

This sequence belongs to the orthopoxvirus OPG001 family. As to quaternary structure, binds to host CC chemokines, such as RANTES/CCL5, MIP-1alpha/CCL3, MCP-1/CCL2 and eotaxin.

The protein localises to the secreted. Its function is as follows. Inhibits host immune defense by binding to host chemokines. Binds host CC chemokines (beta chemokines) such as RANTES with high affinity, but not CXC or C chemokines (alpha and gamma chemokines). The sequence is that of Chemokine-binding protein (OPG001) from Homo sapiens (Human).